A 368-amino-acid chain; its full sequence is Agmatine deiminase (368 aa).

Residue Cys-357 is the Amidino-cysteine intermediate of the active site.

It belongs to the agmatine deiminase family. Homodimer.

It catalyses the reaction agmatine + H2O = N-carbamoylputrescine + NH4(+). The protein operates within amine and polyamine biosynthesis; putrescine biosynthesis via agmatine pathway; N-carbamoylputrescine from agmatine: step 1/1. Mediates the hydrolysis of agmatine into N-carbamoylputrescine in the arginine decarboxylase (ADC) pathway of putrescine biosynthesis, a basic polyamine. This is Agmatine deiminase from Pseudomonas savastanoi pv. phaseolicola (strain 1448A / Race 6) (Pseudomonas syringae pv. phaseolicola (strain 1448A / Race 6)).